The primary structure comprises 422 residues: Target of rapamycin complex 2 subunit bit61 (422 aa).

Polar residues predominate over residues 48–69; that stretch reads VTTKESNVGDSDTTENIKSPFN. The disordered stretch occupies residues 48–101; it reads VTTKESNVGDSDTTENIKSPFNGQWPFSRRSSQSSSHPVFEETHWSKHSKRPGK. Residues Ser109, Ser132, and Ser201 each carry the phosphoserine modification.

The protein belongs to the BIT61 family. As to quaternary structure, the target of rapamycin complex 2 (TORC2) is composed of at least bit61, pop3/wat1, sin1, ste20 and tor1. Either Thr-23, Thr-25 or Ser-26 and Ser-78 or Ser-79 are phosphorylated as well.

The protein resides in the cytoplasm. It is found in the nucleus. Functionally, component of TORC2, which regulates multiple cellular processes to control cell growth in response to environmental signals. TORC2 is required for cell survival under various stress conditions. TORC2 positively controls G1 cell-cycle arrest, sexual development and amino acid uptake. Positively regulates amino acid uptake through the control of expression of amino acid permeases. The sequence is that of Target of rapamycin complex 2 subunit bit61 from Schizosaccharomyces pombe (strain 972 / ATCC 24843) (Fission yeast).